The sequence spans 96 residues: MNTSARLLALVSKSKNNWILQQGDTKLFKSFRFKNFIEAWGFMSCVALRAQQLNHHPEWTNVYNKVDITLTTHDTKGLTEKDLKLAEFIDTLAKDN.

The protein belongs to the pterin-4-alpha-carbinolamine dehydratase family.

It localises to the spore wall. The enzyme catalyses (4aS,6R)-4a-hydroxy-L-erythro-5,6,7,8-tetrahydrobiopterin = (6R)-L-erythro-6,7-dihydrobiopterin + H2O. Its function is as follows. Has a role in spore wall formation. The protein is Pterin-4-alpha-carbinolamine dehydratase (omt2) of Schizosaccharomyces pombe (strain 972 / ATCC 24843) (Fission yeast).